Here is a 190-residue protein sequence, read N- to C-terminus: Pyridoxal 5'-phosphate synthase subunit PdxT (190 aa).

46-48 (GES) serves as a coordination point for L-glutamine. Residue cysteine 78 is the Nucleophile of the active site. L-glutamine-binding positions include arginine 105 and 138-139 (IR). Residues histidine 174 and glutamate 176 each act as charge relay system in the active site.

Belongs to the glutaminase PdxT/SNO family. In terms of assembly, in the presence of PdxS, forms a dodecamer of heterodimers. Only shows activity in the heterodimer.

It carries out the reaction aldehydo-D-ribose 5-phosphate + D-glyceraldehyde 3-phosphate + L-glutamine = pyridoxal 5'-phosphate + L-glutamate + phosphate + 3 H2O + H(+). The enzyme catalyses L-glutamine + H2O = L-glutamate + NH4(+). It functions in the pathway cofactor biosynthesis; pyridoxal 5'-phosphate biosynthesis. Catalyzes the hydrolysis of glutamine to glutamate and ammonia as part of the biosynthesis of pyridoxal 5'-phosphate. The resulting ammonia molecule is channeled to the active site of PdxS. In Bifidobacterium longum (strain NCC 2705), this protein is Pyridoxal 5'-phosphate synthase subunit PdxT.